We begin with the raw amino-acid sequence, 180 residues long: Transcriptional repressor NrdR (180 aa).

Residues 3 to 34 (CPYCQNTSSRVLESRSTEAGQSIRRRRECLQC) fold into a zinc finger. Residues 49-139 (ISVLKKDKSK…VYGEFKGITD (91 aa)) form the ATP-cone domain. The segment at 148 to 180 (QQEERESSSSPEWSDAGEEATVIEDSSQVMASS) is disordered. Residues 171–180 (EDSSQVMASS) show a composition bias toward polar residues.

The protein belongs to the NrdR family. Zn(2+) serves as cofactor.

Its function is as follows. Negatively regulates transcription of bacterial ribonucleotide reductase nrd genes and operons by binding to NrdR-boxes. This Gloeothece citriformis (strain PCC 7424) (Cyanothece sp. (strain PCC 7424)) protein is Transcriptional repressor NrdR.